Consider the following 989-residue polypeptide: Bifunctional glutamine synthetase adenylyltransferase/adenylyl-removing enzyme (989 aa).

Residues 1-473 (MRGPLEPDSA…HYANLFEDVA (473 aa)) are adenylyl removase. The segment at 479-989 (DADLMFPPDE…FERILETAAE (511 aa)) is adenylyl transferase.

The protein belongs to the GlnE family. Requires Mg(2+) as cofactor.

The catalysed reaction is [glutamine synthetase]-O(4)-(5'-adenylyl)-L-tyrosine + phosphate = [glutamine synthetase]-L-tyrosine + ADP. It catalyses the reaction [glutamine synthetase]-L-tyrosine + ATP = [glutamine synthetase]-O(4)-(5'-adenylyl)-L-tyrosine + diphosphate. Its function is as follows. Involved in the regulation of glutamine synthetase GlnA, a key enzyme in the process to assimilate ammonia. When cellular nitrogen levels are high, the C-terminal adenylyl transferase (AT) inactivates GlnA by covalent transfer of an adenylyl group from ATP to specific tyrosine residue of GlnA, thus reducing its activity. Conversely, when nitrogen levels are low, the N-terminal adenylyl removase (AR) activates GlnA by removing the adenylyl group by phosphorolysis, increasing its activity. The regulatory region of GlnE binds the signal transduction protein PII (GlnB) which indicates the nitrogen status of the cell. The sequence is that of Bifunctional glutamine synthetase adenylyltransferase/adenylyl-removing enzyme from Xanthobacter autotrophicus (strain ATCC BAA-1158 / Py2).